The following is a 353-amino-acid chain: Uroporphyrinogen decarboxylase (353 aa).

Residues 30–34, D79, Y154, S209, and H332 each bind substrate; that span reads RQAGR.

This sequence belongs to the uroporphyrinogen decarboxylase family. Homodimer.

The protein localises to the cytoplasm. The enzyme catalyses uroporphyrinogen III + 4 H(+) = coproporphyrinogen III + 4 CO2. It participates in porphyrin-containing compound metabolism; protoporphyrin-IX biosynthesis; coproporphyrinogen-III from 5-aminolevulinate: step 4/4. Functionally, catalyzes the decarboxylation of four acetate groups of uroporphyrinogen-III to yield coproporphyrinogen-III. The protein is Uroporphyrinogen decarboxylase of Mycobacterium marinum (strain ATCC BAA-535 / M).